Consider the following 456-residue polypeptide: Probable glycine dehydrogenase (decarboxylating) subunit 1 (456 aa).

It belongs to the GcvP family. N-terminal subunit subfamily. The glycine cleavage system is composed of four proteins: P, T, L and H. In this organism, the P 'protein' is a heterodimer of two subunits.

The catalysed reaction is N(6)-[(R)-lipoyl]-L-lysyl-[glycine-cleavage complex H protein] + glycine + H(+) = N(6)-[(R)-S(8)-aminomethyldihydrolipoyl]-L-lysyl-[glycine-cleavage complex H protein] + CO2. Functionally, the glycine cleavage system catalyzes the degradation of glycine. The P protein binds the alpha-amino group of glycine through its pyridoxal phosphate cofactor; CO(2) is released and the remaining methylamine moiety is then transferred to the lipoamide cofactor of the H protein. This is Probable glycine dehydrogenase (decarboxylating) subunit 1 from Legionella pneumophila (strain Lens).